We begin with the raw amino-acid sequence, 223 residues long: MQLEKLQKKLGHQFTNLDYLKQALTHRSAAAFNNERLEFLGDSILNFAIGKALYEKFPKSNEGELSRMRATLVKEQTLAVVARQVELGDYLKLGAGELKSGGFRRESILSDCVEALIAAIYLDAGIDVALARVYQWYQELLEQIKPGEAQKDPKTRLQEFLQGHRLKLPEYEVIEIKGDAHNQSFRVSCKVETLTDVVFGQGTSRRKAEQHAAQQAIEKLKIK.

Residues 3 to 125 enclose the RNase III domain; the sequence is LEKLQKKLGH…LIAAIYLDAG (123 aa). E38 is a Mg(2+) binding site. The active site involves D42. D111 and E114 together coordinate Mg(2+). E114 is an active-site residue. A DRBM domain is found at 152-222; the sequence is DPKTRLQEFL…AQQAIEKLKI (71 aa).

Belongs to the ribonuclease III family. As to quaternary structure, homodimer. The cofactor is Mg(2+).

The protein localises to the cytoplasm. The enzyme catalyses Endonucleolytic cleavage to 5'-phosphomonoester.. Functionally, digests double-stranded RNA. Involved in the processing of primary rRNA transcript to yield the immediate precursors to the large and small rRNAs (23S and 16S). Processes some mRNAs, and tRNAs when they are encoded in the rRNA operon. Processes pre-crRNA and tracrRNA of type II CRISPR loci if present in the organism. The polypeptide is Ribonuclease 3 (Histophilus somni (strain 2336) (Haemophilus somnus)).